The sequence spans 395 residues: Zinc-regulated GTPase metalloprotein activator 1E (395 aa).

The interval 1-22 (MLPAVGSVDEEEDPAEEDCPEL) is disordered. Residues 8-20 (VDEEEDPAEEDCP) are compositionally biased toward acidic residues. A psi-PxLVp motif motif is present at residues 17–24 (EDCPELVP). 49–56 (GYLGAGKT) provides a ligand contact to GTP. Cys107, Cys109, and Cys110 together coordinate Zn(2+). Residues 107-110 (CLCC) carry the CXCC motif motif. Residues 110 to 114 (CSVKD) and 203 to 206 (NKTD) contribute to the GTP site. The CobW C-terminal domain maps to 274 to 377 (IVTITFEVPG…ILKQLFIATV (104 aa)).

It belongs to the SIMIBI class G3E GTPase family. ZNG1 subfamily.

The protein resides in the nucleus. It carries out the reaction GTP + H2O = GDP + phosphate + H(+). In terms of biological role, zinc chaperone that directly transfers zinc cofactor to target metalloproteins, thereby activating them. Catalyzes zinc insertion into the active site of methionine aminopeptidase METAP1, which function to cleave the initiator methionine from polypeptides during or after protein translation. Mechanistically, the N-terminal psi-PxLVp motif binds to the C6H2-type zinc finger of inactive form of METAP1. After formation of the docked complex, zinc is transferred from the CXCC motif in the GTPase domain of ZNG1E to the zinc binding site in the peptidase domain of METAP1 in a process requiring GTP hydrolysis. GTP/GDP exchange is required for release of active METAP1. This is Zinc-regulated GTPase metalloprotein activator 1E from Homo sapiens (Human).